Reading from the N-terminus, the 451-residue chain is Serine/threonine-protein phosphatase 2A 55 kDa regulatory subunit B delta isoform (451 aa).

WD repeat units lie at residues 30 to 69 (AEAD…KSRP), 95 to 136 (EIEE…KRAE), 179 to 217 (AHTY…RSFN), 228 to 268 (ELTE…LCDR), 287 to 325 (EIIS…RPVE), 342 to 383 (ENDC…DITL), and 418 to 451 (DFNK…DKIN).

Belongs to the phosphatase 2A regulatory subunit B family. In terms of assembly, PP2A consists of a common heterodimeric core enzyme, composed of a 36 kDa catalytic subunit (subunit C) and a 65 kDa constant regulatory subunit (PR65 or subunit A), that associates with a variety of regulatory subunits.

It localises to the cytoplasm. In terms of biological role, substrate-recognition subunit of protein phosphatase 2A (PP2A) that plays a key role in cell cycle by controlling mitosis entry and exit. The activity of PP2A complexes containing PPP2R2D (PR55-delta) fluctuate during the cell cycle: the activity is high in interphase and low in mitosis. The chain is Serine/threonine-protein phosphatase 2A 55 kDa regulatory subunit B delta isoform (PPP2R2D) from Gallus gallus (Chicken).